The following is a 98-amino-acid chain: Transcription elongation factor A protein-like 7 (98 aa).

Basic and acidic residues predominate over residues 1-24; sequence MQRSCNEKEGKPKCSEPKREEEHP. The segment at 1–31 is disordered; that stretch reads MQRSCNEKEGKPKCSEPKREEEHPYGAFEGQ. A coiled-coil region spans residues 59-89; sequence GEEMTGEEEEMERCLEEIRSLRKKFRALHSN.

This sequence belongs to the TFS-II family. TFA subfamily.

It localises to the nucleus. Functionally, plays a role in the negative regulation of NF-kappa-B signaling at the basal level by modulating transcriptional activity of NF-kappa-B on its target gene promoters. Associates with cyclin D1 promoter containing Myc E-box sequence and transcriptionally represses cyclin D1 expression. Regulates telomerase reverse transcriptase expression and telomerase activity in both ALT (alternative lengthening of telomeres)and telomerase-positive cell lines. The sequence is that of Transcription elongation factor A protein-like 7 (Tceal7) from Rattus norvegicus (Rat).